A 198-amino-acid polypeptide reads, in one-letter code: Na(+)-translocating NADH-quinone reductase subunit E (198 aa).

A run of 6 helical transmembrane segments spans residues 11-31 (SIFI…FLAV), 39-59 (FGLG…NNLV), 77-97 (FLNF…LEMI), 110-130 (GIFL…SFMV), 140-160 (VVYG…LAGI), and 176-196 (LGIT…FSGV).

Belongs to the NqrDE/RnfAE family. Composed of six subunits; NqrA, NqrB, NqrC, NqrD, NqrE and NqrF.

The protein localises to the cell inner membrane. The enzyme catalyses a ubiquinone + n Na(+)(in) + NADH + H(+) = a ubiquinol + n Na(+)(out) + NAD(+). Its function is as follows. NQR complex catalyzes the reduction of ubiquinone-1 to ubiquinol by two successive reactions, coupled with the transport of Na(+) ions from the cytoplasm to the periplasm. NqrA to NqrE are probably involved in the second step, the conversion of ubisemiquinone to ubiquinol. This is Na(+)-translocating NADH-quinone reductase subunit E from Vibrio anguillarum (Listonella anguillarum).